The chain runs to 383 residues: MQPSARRPFDLATPAPNGLRRGRTTGTCATAAVKAALLRLVRGETVDAVEVSLPDPDYCLEVPIARIEPLASGAVRADVLKYAGDDPDNTDGATIFAEVSVNHAGEVRFMAAPGVGTVTQPGLRVPPGEPAINPVPRQMMRMAVDEVLAGGANPGFDLAIGCVDGERIARRTFNPMLGIVGGISILGTSGIVEPMSLAAWMASIEVYVRVALGDAPEAIAFTPGKIGRAYAAHPLALSKKQVVQIANFIGASLDYAQTALEEDRHRLGTLWVLGHPGKLAKVLDGVWDTHSSKSGMAMGSVAAVAAELGVAAALVEQIKTANTVENVIQILQHQPGAQAFWTEIEQRIAARMQPRVPRADRVAVRLFAMDGTPLGAAGQEAGA.

The tract at residues 1–24 (MQPSARRPFDLATPAPNGLRRGRT) is disordered.

It belongs to the CbiD family.

The catalysed reaction is Co-precorrin-5B + S-adenosyl-L-methionine = Co-precorrin-6A + S-adenosyl-L-homocysteine. It functions in the pathway cofactor biosynthesis; adenosylcobalamin biosynthesis; cob(II)yrinate a,c-diamide from sirohydrochlorin (anaerobic route): step 6/10. Functionally, catalyzes the methylation of C-1 in cobalt-precorrin-5B to form cobalt-precorrin-6A. The sequence is that of Cobalt-precorrin-5B C(1)-methyltransferase from Ralstonia nicotianae (strain ATCC BAA-1114 / GMI1000) (Ralstonia solanacearum).